The chain runs to 274 residues: Probable cyclic nucleotide phosphodiesterase RPA0124 (274 aa).

Residues D8, H10, D49, N79, H155, H194, and H196 each coordinate Fe cation. Residues H10, D49, and 79–80 (NH) each bind AMP. H196 contacts AMP.

This sequence belongs to the cyclic nucleotide phosphodiesterase class-III family. The cofactor is Fe(2+).

This is Probable cyclic nucleotide phosphodiesterase RPA0124 from Rhodopseudomonas palustris (strain ATCC BAA-98 / CGA009).